Here is a 160-residue protein sequence, read N- to C-terminus: MGQERLDNANPTLFDSKPRHRPVTGTERDESVEDPIDSWEIFDLIRDINDPEHPYTLEQLNVVQEELIKVFIDEEETFVKVNFTPTIPHCSMATLIGLAIRVKLLRSLHPKVKVSVSITPGSHSTEESINRQLADKERVAAAMENQGLMHAVNECLRVPE.

Residues M1 to V32 are disordered.

It belongs to the MIP18 family.

In terms of biological role, may play a role in chromosome segregation through establishment of sister chromatid cohesion. The polypeptide is MIP18 family protein F45G2.10 (Caenorhabditis elegans).